Here is an 802-residue protein sequence, read N- to C-terminus: Leucine--tRNA ligase (802 aa).

The 'HIGH' region motif lies at 40-51; sequence PYPSGAGLHVGH. The 'KMSKS' region motif lies at 576 to 580; that stretch reads KMSKS. Lys579 lines the ATP pocket.

It belongs to the class-I aminoacyl-tRNA synthetase family.

The protein localises to the cytoplasm. The enzyme catalyses tRNA(Leu) + L-leucine + ATP = L-leucyl-tRNA(Leu) + AMP + diphosphate. This is Leucine--tRNA ligase from Bacillus anthracis (strain A0248).